The primary structure comprises 113 residues: Large ribosomal subunit protein bL17 (113 aa).

This sequence belongs to the bacterial ribosomal protein bL17 family. In terms of assembly, part of the 50S ribosomal subunit. Contacts protein L32.

The polypeptide is Large ribosomal subunit protein bL17 (Syntrophomonas wolfei subsp. wolfei (strain DSM 2245B / Goettingen)).